The primary structure comprises 216 residues: Regulator of G-protein signaling 19 (216 aa).

Positions 1–19 are enriched in basic and acidic residues; the sequence is MPTPHEAEKQHTGPEEADR. Residues 1-30 form a disordered region; it reads MPTPHEAEKQHTGPEEADRPPSMSSHDAAP. 2 positions are modified to phosphoserine: serine 24 and serine 97. In terms of domain architecture, RGS spans 90 to 206; it reads SFDKLMHSPT…LTSPTYRSLL (117 aa). Position 151 is a phosphoserine; by MAPK1 and MAPK3 (serine 151). The segment at 207-216 is interaction with GIPC; it reads LQGAPQSSEA.

In terms of assembly, interacts with GIPC PDZ domain. Interacts with GNAO1. Post-translationally, fatty acylated. Heavily palmitoylated in the cysteine string motif. Phosphorylated, mainly on serine residues.

Its subcellular location is the membrane. Its function is as follows. Inhibits signal transduction by increasing the GTPase activity of G protein alpha subunits thereby driving them into their inactive GDP-bound form. Binds to G-alpha subfamily 1 members, with the order G(i)a3 &gt; G(i)a1 &gt; G(o)a &gt;&gt; G(z)a/G(i)a2. Activity on G(z)-alpha is inhibited by phosphorylation and palmitoylation of the G-protein. The protein is Regulator of G-protein signaling 19 (Rgs19) of Mus musculus (Mouse).